Consider the following 367-residue polypeptide: Probable butyrate kinase (367 aa).

It belongs to the acetokinase family.

It localises to the cytoplasm. It carries out the reaction butanoate + ATP = butanoyl phosphate + ADP. The sequence is that of Probable butyrate kinase from Bacillus cereus (strain ATCC 14579 / DSM 31 / CCUG 7414 / JCM 2152 / NBRC 15305 / NCIMB 9373 / NCTC 2599 / NRRL B-3711).